Here is a 503-residue protein sequence, read N- to C-terminus: 2,3-bisphosphoglycerate-independent phosphoglycerate mutase (503 aa).

Mn(2+) is bound by residues D10 and S60. S60 functions as the Phosphoserine intermediate in the catalytic mechanism. Substrate contacts are provided by residues H121, 150 to 151 (RD), R181, R187, 256 to 259 (RPDR), and K330. Mn(2+) contacts are provided by D396, H400, D437, H438, and H455.

This sequence belongs to the BPG-independent phosphoglycerate mutase family. In terms of assembly, monomer. Requires Mn(2+) as cofactor.

It catalyses the reaction (2R)-2-phosphoglycerate = (2R)-3-phosphoglycerate. It participates in carbohydrate degradation; glycolysis; pyruvate from D-glyceraldehyde 3-phosphate: step 3/5. Functionally, catalyzes the interconversion of 2-phosphoglycerate and 3-phosphoglycerate. The chain is 2,3-bisphosphoglycerate-independent phosphoglycerate mutase from Mycoplasmoides gallisepticum (strain R(low / passage 15 / clone 2)) (Mycoplasma gallisepticum).